A 218-amino-acid chain; its full sequence is Eukaryotic translation initiation factor 3 subunit K (218 aa).

The 162-residue stretch at 44–205 (YDWGANLAVL…NIKTKNITEK (162 aa)) folds into the PCI domain.

It belongs to the eIF-3 subunit K family. Component of the eukaryotic translation initiation factor 3 (eIF-3) complex.

It is found in the cytoplasm. In terms of biological role, component of the eukaryotic translation initiation factor 3 (eIF-3) complex, which is involved in protein synthesis of a specialized repertoire of mRNAs and, together with other initiation factors, stimulates binding of mRNA and methionyl-tRNAi to the 40S ribosome. The eIF-3 complex specifically targets and initiates translation of a subset of mRNAs involved in cell proliferation. This chain is Eukaryotic translation initiation factor 3 subunit K, found in Bombyx mori (Silk moth).